The primary structure comprises 436 residues: Phosphomethylpyrimidine synthase (436 aa).

Substrate-binding positions include Asn-69, Met-98, Tyr-127, His-163, 185-187 (SRG), 226-229 (DACR), and Glu-265. His-269 is a Zn(2+) binding site. A substrate-binding site is contributed by Tyr-292. Residue His-333 coordinates Zn(2+). Positions 409, 412, and 416 each coordinate [4Fe-4S] cluster.

Belongs to the ThiC family. The cofactor is [4Fe-4S] cluster.

It catalyses the reaction 5-amino-1-(5-phospho-beta-D-ribosyl)imidazole + S-adenosyl-L-methionine = 4-amino-2-methyl-5-(phosphooxymethyl)pyrimidine + CO + 5'-deoxyadenosine + formate + L-methionine + 3 H(+). Its pathway is cofactor biosynthesis; thiamine diphosphate biosynthesis. Functionally, catalyzes the synthesis of the hydroxymethylpyrimidine phosphate (HMP-P) moiety of thiamine from aminoimidazole ribotide (AIR) in a radical S-adenosyl-L-methionine (SAM)-dependent reaction. The sequence is that of Phosphomethylpyrimidine synthase from Clostridium acetobutylicum (strain ATCC 824 / DSM 792 / JCM 1419 / IAM 19013 / LMG 5710 / NBRC 13948 / NRRL B-527 / VKM B-1787 / 2291 / W).